We begin with the raw amino-acid sequence, 338 residues long: Large ribosomal subunit protein uL10 (338 aa).

The segment at 302-338 is disordered; it reads IAAQPQPAEEAEEKVEEEEEEEKEEEEALAGLGALFG. A compositionally biased stretch (acidic residues) spans 310-329; the sequence is EEAEEKVEEEEEEEKEEEEA.

It belongs to the universal ribosomal protein uL10 family. Part of the 50S ribosomal subunit. Forms part of the ribosomal stalk which helps the ribosome interact with GTP-bound translation factors. Forms a heptameric L10(L12)2(L12)2(L12)2 complex, where L10 forms an elongated spine to which the L12 dimers bind in a sequential fashion.

In terms of biological role, forms part of the ribosomal stalk, playing a central role in the interaction of the ribosome with GTP-bound translation factors. This is Large ribosomal subunit protein uL10 from Thermococcus sibiricus (strain DSM 12597 / MM 739).